Here is a 345-residue protein sequence, read N- to C-terminus: UDP-N-acetylenolpyruvoylglucosamine reductase (345 aa).

The FAD-binding PCMH-type domain occupies 16–185; it reads VNAFAKSVVT…VSVGLRLCKK (170 aa). Arginine 162 is an active-site residue. The active-site Proton donor is the serine 231. Residue glutamate 328 is part of the active site.

Belongs to the MurB family. FAD is required as a cofactor.

The protein localises to the cytoplasm. It catalyses the reaction UDP-N-acetyl-alpha-D-muramate + NADP(+) = UDP-N-acetyl-3-O-(1-carboxyvinyl)-alpha-D-glucosamine + NADPH + H(+). It functions in the pathway cell wall biogenesis; peptidoglycan biosynthesis. Cell wall formation. In Blochmanniella pennsylvanica (strain BPEN), this protein is UDP-N-acetylenolpyruvoylglucosamine reductase.